The sequence spans 268 residues: 3-methyl-2-oxobutanoate hydroxymethyltransferase (268 aa).

Positions 44 and 83 each coordinate Mg(2+). Residues 44-45, Asp83, and Lys113 contribute to the 3-methyl-2-oxobutanoate site; that span reads DS. Glu115 is a Mg(2+) binding site. Residue Glu183 is the Proton acceptor of the active site.

It belongs to the PanB family. Homodecamer; pentamer of dimers. Requires Mg(2+) as cofactor.

Its subcellular location is the cytoplasm. The enzyme catalyses 3-methyl-2-oxobutanoate + (6R)-5,10-methylene-5,6,7,8-tetrahydrofolate + H2O = 2-dehydropantoate + (6S)-5,6,7,8-tetrahydrofolate. Its pathway is cofactor biosynthesis; (R)-pantothenate biosynthesis; (R)-pantoate from 3-methyl-2-oxobutanoate: step 1/2. Catalyzes the reversible reaction in which hydroxymethyl group from 5,10-methylenetetrahydrofolate is transferred onto alpha-ketoisovalerate to form ketopantoate. In Leptospira biflexa serovar Patoc (strain Patoc 1 / Ames), this protein is 3-methyl-2-oxobutanoate hydroxymethyltransferase.